The primary structure comprises 503 residues: Envelope glycoprotein p57 (503 aa).

Positions 1-22 (MQLSMSFLIGFGTLVLALSART) are cleaved as a signal peptide. The Extracellular portion of the chain corresponds to 23–467 (FDLQGLSCNT…FLNPLGWLRD (445 aa)). Asn-63, Asn-109, Asn-139, Asn-192, Asn-196, Asn-202, Asn-221, Asn-230, and Asn-235 each carry an N-linked (GlcNAc...) asparagine; by host glycan. The fusion peptide stretch occupies residues 274–315 (ILQSLLLGVFGTGIASASQFLRGWLNHPDIIGYIVNGVGVVW). 4 N-linked (GlcNAc...) asparagine; by host glycosylation sites follow: Asn-321, Asn-328, Asn-388, and Asn-438. A helical membrane pass occupies residues 468–488 (LLAWAAWLGGVLYLISLCVSL). The Cytoplasmic portion of the chain corresponds to 489 to 503 (PASFARRRRLGRWQE).

Post-translationally, glycosated; Stabilizes it. In terms of processing, a portion of p57 is cleaved into p27 and p29. p27 and p29 are called gp43 when glycosylated, as they seem to have the same molecular weight.

It is found in the host endoplasmic reticulum membrane. Its subcellular location is the virion. The protein resides in the host cell membrane. In terms of biological role, unprocessed envelope protein p57 is thought to be involved in attachment of the virus to its cell surface receptor. This attachment induces virion internalization predominantly through clathrin-dependent endocytosis. Its function is as follows. Envelope protein p27 and p29 presumably linked by disulfide bond are the viral type II fusion protein, involved in pH-dependent fusion within early endosomes after internalization of the virion by endocytosis. This Borna disease virus 1 (BoDV-1) protein is Envelope glycoprotein p57 (G).